Reading from the N-terminus, the 604-residue chain is MIVRILLLFIALFTFGVQAQAIKESYAFAVLGEPRYAFNFNHFDYVNPAAPKGGQITLSALGTFDNFNRYALRGNPGARTEQLYDTLFTTSDDEPGSYYPLIAESARYADDYSWVEVAINPRARFHDGSPITARDVEFTFQKFMTEGVPQFRLVYKGTTVKAIAPLTVRIELAKPGKEDMLSLFSLPVFPEKYWKDHKLSDPLATPPLASGPYRVTSWKMGQNIVYSRVKDYWAANLPVNRGRWNFDTIRYDYYLDDNVAFEAFKAGAFDLRMENDAKNWATRYTGKNFDKKYIIKDEQKNESAQDTRWLAFNIQRPVFSDRRVREAITLAFDFEWMNKALFYNAWSRTNSYFQNTEYAARNYPDAAELVLLAPMKKDLPSEVFTQIYQPPVSKGDGYDRDNLLKADKLLNEAGWVLKGQQRVNATTGQPLSFELLLPASSNSQWVLPFQHSLQRLGINMDIRKVDNSQITNRMRSRDYDMMPRVWRAMPWPSSDLQISWSSEYINSTYNAPGVQSPVIDSLINQIIAAQGNKEKLLPLGRALDRVLTWNYYMLPMWYMAEDRLAWWDKFSQPAVRPIYSLGIDTWWYDVNKAAKLPSASKQGE.

The first 19 residues, 1-19, serve as a signal peptide directing secretion; it reads MIVRILLLFIALFTFGVQA.

This sequence to H.influenzae HbpA.

This is an uncharacterized protein from Escherichia coli (strain K12).